Consider the following 426-residue polypeptide: 5-hydroxybenzimidazole synthase BzaB (426 aa).

Substrate is bound by residues M95, Y124, H163, 185–187 (SRG), 226–229 (DAIR), and E265. A Zn(2+)-binding site is contributed by H269. Position 292 (F292) interacts with substrate. H333 lines the Zn(2+) pocket. Residues C407, C410, and C414 each coordinate [4Fe-4S] cluster.

This sequence belongs to the ThiC family. 5-hydroxybenzimidazole synthase subfamily. The cofactor is [4Fe-4S] cluster.

It catalyses the reaction 5-amino-1-(5-phospho-beta-D-ribosyl)imidazole + AH2 + S-adenosyl-L-methionine = 5-hydroxybenzimidazole + 5'-deoxyadenosine + formate + L-methionine + A + NH4(+) + phosphate + 2 H(+). Functionally, together with BzaA, probably catalyzes the conversion of aminoimidazole ribotide (AIR) to 5-hydroxybenzimidazole (5-HBI) in a radical S-adenosyl-L-methionine (SAM)-dependent reaction. Is thus involved in the anaerobic biosynthesis of the benzimidazole lower axial ligand of the cobamide produced by M.thermoacetica. Requires BzaA for catalytic activity, as BzaB alone displays no activity. This Moorella thermoacetica (strain ATCC 39073 / JCM 9320) protein is 5-hydroxybenzimidazole synthase BzaB.